The primary structure comprises 475 residues: Cysteine--tRNA ligase (475 aa).

Zn(2+) is bound at residue Cys-28. A 'HIGH' region motif is present at residues 30-40 (PTVYDYAHIGN). Residues Cys-213, His-238, and Glu-242 each contribute to the Zn(2+) site. The 'KMSKS' region signature appears at 270-274 (KMSKS). Position 273 (Lys-273) interacts with ATP.

It belongs to the class-I aminoacyl-tRNA synthetase family. Monomer. The cofactor is Zn(2+).

It localises to the cytoplasm. It catalyses the reaction tRNA(Cys) + L-cysteine + ATP = L-cysteinyl-tRNA(Cys) + AMP + diphosphate. In Chlamydia muridarum (strain MoPn / Nigg), this protein is Cysteine--tRNA ligase (cysS).